The chain runs to 341 residues: Very-long-chain 3-oxoacyl-CoA reductase (341 aa).

Residues 17–37 traverse the membrane as a helical segment; the sequence is ALYGALLLGVYKLTTFALSLV. NADP(+) is bound by residues V63, D117, N144, Y218, K222, V251, and S253. Y218 functions as the Proton donor in the catalytic mechanism. K222 acts as the Lowers pKa of active site Tyr in catalysis.

Belongs to the short-chain dehydrogenases/reductases (SDR) family.

The protein localises to the endoplasmic reticulum membrane. It carries out the reaction a very-long-chain (3R)-3-hydroxyacyl-CoA + NADP(+) = a very-long-chain 3-oxoacyl-CoA + NADPH + H(+). It participates in lipid metabolism; fatty acid biosynthesis. Functionally, component of the microsomal membrane bound fatty acid elongation system, which produces the 26-carbon very long-chain fatty acids (VLCFA) from palmitate. Catalyzes the reduction of the 3-ketoacyl-CoA intermediate that is formed in each cycle of fatty acid elongation. VLCFAs serve as precursors for ceramide and sphingolipids. This chain is Very-long-chain 3-oxoacyl-CoA reductase, found in Meyerozyma guilliermondii (strain ATCC 6260 / CBS 566 / DSM 6381 / JCM 1539 / NBRC 10279 / NRRL Y-324) (Yeast).